Consider the following 931-residue polypeptide: Valine--tRNA ligase (931 aa).

The short motif at 42 to 52 (PNVTGSLHMGH) is the 'HIGH' region element. Residues 523–527 (KMSKS) carry the 'KMSKS' region motif. Lys526 contacts ATP. Positions 859 to 931 (MAGLIDKEAE…EEQLEKIKYL (73 aa)) form a coiled coil.

The protein belongs to the class-I aminoacyl-tRNA synthetase family. ValS type 1 subfamily. As to quaternary structure, monomer.

The protein localises to the cytoplasm. The enzyme catalyses tRNA(Val) + L-valine + ATP = L-valyl-tRNA(Val) + AMP + diphosphate. Catalyzes the attachment of valine to tRNA(Val). As ValRS can inadvertently accommodate and process structurally similar amino acids such as threonine, to avoid such errors, it has a 'posttransfer' editing activity that hydrolyzes mischarged Thr-tRNA(Val) in a tRNA-dependent manner. The protein is Valine--tRNA ligase of Alcanivorax borkumensis (strain ATCC 700651 / DSM 11573 / NCIMB 13689 / SK2).